A 292-amino-acid chain; its full sequence is 32 kDa protein (292 aa).

In terms of biological role, may be involved in transmission by vector nematode species. The sequence is that of 32 kDa protein from Bidens pilosa (Hairy beggarticks).